The following is a 201-amino-acid chain: Large ribosomal subunit protein uL4 (201 aa).

The tract at residues 39-72 (KRQGTSAQKSRSEVIGSGKKPWRQKGTGRARAGS) is disordered.

This sequence belongs to the universal ribosomal protein uL4 family. Part of the 50S ribosomal subunit.

Functionally, one of the primary rRNA binding proteins, this protein initially binds near the 5'-end of the 23S rRNA. It is important during the early stages of 50S assembly. It makes multiple contacts with different domains of the 23S rRNA in the assembled 50S subunit and ribosome. Its function is as follows. Forms part of the polypeptide exit tunnel. This is Large ribosomal subunit protein uL4 from Wigglesworthia glossinidia brevipalpis.